Here is a 270-residue protein sequence, read N- to C-terminus: Type III pantothenate kinase (270 aa).

19-26 (DIGNTSTT) is an ATP binding site. Substrate-binding positions include Y109 and 116–119 (GADR). Residue D118 is the Proton acceptor of the active site. K(+) is bound at residue D139. T142 contacts ATP. T194 provides a ligand contact to substrate.

It belongs to the type III pantothenate kinase family. As to quaternary structure, homodimer. Requires NH4(+) as cofactor. K(+) serves as cofactor.

Its subcellular location is the cytoplasm. The catalysed reaction is (R)-pantothenate + ATP = (R)-4'-phosphopantothenate + ADP + H(+). Its pathway is cofactor biosynthesis; coenzyme A biosynthesis; CoA from (R)-pantothenate: step 1/5. In terms of biological role, catalyzes the phosphorylation of pantothenate (Pan), the first step in CoA biosynthesis. This chain is Type III pantothenate kinase, found in Chlorobaculum tepidum (strain ATCC 49652 / DSM 12025 / NBRC 103806 / TLS) (Chlorobium tepidum).